We begin with the raw amino-acid sequence, 376 residues long: Protein-glutamate methylesterase/protein-glutamine glutaminase 1 (376 aa).

The Response regulatory domain maps to 4 to 121 (KVLVVDDSSF…ARNRDEAVSL (118 aa)). 4-aspartylphosphate is present on Asp55. The tract at residues 138–169 (RPVASSTPVQERPQSTLNRPTTGLRREASAQA) is disordered. The span at 141-158 (ASSTPVQERPQSTLNRPT) shows a compositional bias: polar residues. The 194-residue stretch at 183–376 (SGKKYQLTAI…ERMLVEVGLA (194 aa)) folds into the CheB-type methylesterase domain. Active-site residues include Ser195, His222, and Asp318.

Belongs to the CheB family. In terms of processing, phosphorylated by CheA. Phosphorylation of the N-terminal regulatory domain activates the methylesterase activity.

The protein resides in the cytoplasm. The enzyme catalyses [protein]-L-glutamate 5-O-methyl ester + H2O = L-glutamyl-[protein] + methanol + H(+). It catalyses the reaction L-glutaminyl-[protein] + H2O = L-glutamyl-[protein] + NH4(+). In terms of biological role, involved in chemotaxis. Part of a chemotaxis signal transduction system that modulates chemotaxis in response to various stimuli. Catalyzes the demethylation of specific methylglutamate residues introduced into the chemoreceptors (methyl-accepting chemotaxis proteins or MCP) by CheR. Also mediates the irreversible deamidation of specific glutamine residues to glutamic acid. The polypeptide is Protein-glutamate methylesterase/protein-glutamine glutaminase 1 (Vibrio vulnificus (strain YJ016)).